Here is a 383-residue protein sequence, read N- to C-terminus: Succinyl-diaminopimelate desuccinylase (383 aa).

His79 contributes to the Zn(2+) binding site. Asp81 is a catalytic residue. Residue Asp110 participates in Zn(2+) binding. The active-site Proton acceptor is the Glu141. Zn(2+) is bound by residues Glu142, Glu170, and His355.

Belongs to the peptidase M20A family. DapE subfamily. Homodimer. Zn(2+) serves as cofactor. The cofactor is Co(2+).

It catalyses the reaction N-succinyl-(2S,6S)-2,6-diaminopimelate + H2O = (2S,6S)-2,6-diaminopimelate + succinate. It participates in amino-acid biosynthesis; L-lysine biosynthesis via DAP pathway; LL-2,6-diaminopimelate from (S)-tetrahydrodipicolinate (succinylase route): step 3/3. In terms of biological role, catalyzes the hydrolysis of N-succinyl-L,L-diaminopimelic acid (SDAP), forming succinate and LL-2,6-diaminopimelate (DAP), an intermediate involved in the bacterial biosynthesis of lysine and meso-diaminopimelic acid, an essential component of bacterial cell walls. The chain is Succinyl-diaminopimelate desuccinylase from Helicobacter pylori (strain Shi470).